Here is a 309-residue protein sequence, read N- to C-terminus: SERTA domain-containing protein 2 (309 aa).

Disordered stretches follow at residues 1 to 30 (MLGKGGKRKFDEHEDGLEGKIVSPSDGPSR), 79 to 114 (EGSLRPAFTPSSQPSNSLSDSYQEAPPPAPHPCDLG), and 175 to 220 (PTST…MDSL). Positions 8-18 (RKFDEHEDGLE) are enriched in basic and acidic residues. One can recognise an SERTA domain in the interval 33 to 80 (YTLQRQTIFNISLMKLYNHRPLTEPSLQKTVLINNMLRRIQEELKQEG). 2 stretches are compositionally biased toward low complexity: residues 89 to 99 (SSQPSNSLSDS) and 175 to 189 (PTSTSTEAAHTAAPE). Over residues 204–216 (EGPEEGRTDDSRF) the composition is skewed to basic and acidic residues. The interval 230–306 (TGFLTDLTLD…TELDHIMEVL (77 aa)) is required for transactivation activity. The Nuclear export signal (NES) motif lies at 233 to 238 (LTDLTL).

As to quaternary structure, interacts with XPO1; which mediates nuclear export. Interacts with TFDP1; modulates transactivation activity of TFDP1/E2F complexes. Post-translationally, polyubiquitinated, which promotes proteasomal degradation. As to expression, expressed in white and brown adipose tissue.

The protein localises to the nucleus. It is found in the cytoplasm. Its function is as follows. Acts at E2F-responsive promoters as coregulator to integrate signals provided by PHD- and/or bromodomain-containing transcription factors. May act as coactivator as well as corepressor of E2F1-TFDP1 and E2F4-TFDP1 complexes on E2F consensus binding sites, which would activate or inhibit E2F-target genes expression. Modulates fat storage by down-regulating the expression of key genes involved in adipocyte lipolysis, thermogenesis and oxidative metabolism. This is SERTA domain-containing protein 2 (Sertad2) from Mus musculus (Mouse).